The sequence spans 365 residues: Putative tRNA 2'-phosphotransferase (365 aa).

Disordered regions lie at residues 1–35 (MYKN…IRPR) and 231–254 (LLDA…PESI). Residues 17 to 27 (SGTPATKSSSK) show a composition bias toward low complexity.

It belongs to the KptA/TPT1 family.

It carries out the reaction 2'-phospho-[ligated tRNA] + NAD(+) = mature tRNA + ADP-alpha-D-ribose 1'',2''-cyclic phosphate + nicotinamide. In terms of biological role, catalyzes the last step of tRNA splicing, the transfer of the splice junction 2'-phosphate from ligated tRNA to NAD to produce ADP-ribose 1''-2'' cyclic phosphate. In Schizosaccharomyces pombe (strain 972 / ATCC 24843) (Fission yeast), this protein is Putative tRNA 2'-phosphotransferase.